Reading from the N-terminus, the 249-residue chain is ATP synthase subunit a (249 aa).

6 consecutive transmembrane segments (helical) span residues 30 to 50, 84 to 104, 113 to 133, 143 to 163, 196 to 216, and 221 to 241; these read SAYM…GSAG, FFPL…VGII, HIIV…IYGF, IFVP…IEVF, LLAG…GMVV, and LELL…CIYL.

It belongs to the ATPase A chain family. F-type ATPases have 2 components, CF(1) - the catalytic core - and CF(0) - the membrane proton channel. CF(1) has five subunits: alpha(3), beta(3), gamma(1), delta(1), epsilon(1). CF(0) has four main subunits: a, b, b' and c.

The protein localises to the cell inner membrane. Its function is as follows. Key component of the proton channel; it plays a direct role in the translocation of protons across the membrane. This is ATP synthase subunit a from Rhodopseudomonas palustris (strain BisA53).